The sequence spans 445 residues: Argininosuccinate synthase (445 aa).

Residues 17–25 (AFSGGLDTS) and alanine 43 each bind ATP. Tyrosine 99 contributes to the L-citrulline binding site. Positions 129 and 131 each coordinate ATP. Residues threonine 131, asparagine 135, and aspartate 136 each coordinate L-aspartate. Asparagine 135 is an L-citrulline binding site. Aspartate 136 lines the ATP pocket. Positions 139 and 192 each coordinate L-citrulline. Aspartate 194 lines the ATP pocket. The L-citrulline site is built by threonine 201, glutamate 203, and glutamate 280.

The protein belongs to the argininosuccinate synthase family. Type 2 subfamily. As to quaternary structure, homotetramer.

It is found in the cytoplasm. It carries out the reaction L-citrulline + L-aspartate + ATP = 2-(N(omega)-L-arginino)succinate + AMP + diphosphate + H(+). Its pathway is amino-acid biosynthesis; L-arginine biosynthesis; L-arginine from L-ornithine and carbamoyl phosphate: step 2/3. The chain is Argininosuccinate synthase (argG) from Ralstonia nicotianae (strain ATCC BAA-1114 / GMI1000) (Ralstonia solanacearum).